Consider the following 133-residue polypeptide: Protein FwdD (133 aa).

The polypeptide is Protein FwdD (fwdD) (Methanocaldococcus jannaschii (strain ATCC 43067 / DSM 2661 / JAL-1 / JCM 10045 / NBRC 100440) (Methanococcus jannaschii)).